A 119-amino-acid chain; its full sequence is Basic phospholipase A2 acanthin-1 (119 aa).

Cystine bridges form between Cys-11-Cys-71, Cys-27-Cys-118, Cys-29-Cys-45, Cys-44-Cys-99, Cys-51-Cys-92, Cys-60-Cys-85, and Cys-78-Cys-90. The Ca(2+) site is built by Tyr-28, Gly-30, and Gly-32. His-48 is a catalytic residue. Ca(2+) is bound at residue Asp-49. Asp-93 is a catalytic residue.

The cofactor is Ca(2+). Expressed by the venom gland.

The protein localises to the secreted. The enzyme catalyses a 1,2-diacyl-sn-glycero-3-phosphocholine + H2O = a 1-acyl-sn-glycero-3-phosphocholine + a fatty acid + H(+). Functionally, snake venom phospholipase A2 (PLA2) that potently inhibits ADP-(IC(50)=10 nM) and collagen-induced (IC(50)=7 nM) platelet aggregation when tested on human whole blood. PLA2 catalyzes the calcium-dependent hydrolysis of the 2-acyl groups in 3-sn-phosphoglycerides. The polypeptide is Basic phospholipase A2 acanthin-1 (Acanthophis antarcticus (Common death adder)).